The chain runs to 775 residues: MKKKQEESSLEKLSTWYQDGEQDGGDRSEKRRMSLKASDFESSSRSGGSKSKEDNKSVVDVEHQDRDSKRERDGRERTHGSSSDSSKRKRWDEAGGLVNDGDHKSSKLSDSRHDSGGERVSVSNEHGESRRDLKSDRSLKTSSRDEKSKSRGVKDDDRGSPLKKTSGKDGSEVVREVGRSNRSKTPDADYEKEKYSRKDERSRGRDDGWSDRDRDQEGLKDNWKRRHSSSGDKDQKDGDLLYDRGREREFPRQGRERSEGERSHGRLGGRKDGNRGEAVKALSSGGVSNENYDVIEIQTKPHDYVRGESGPNFARMTESGQQPPKKPSNNEEEWAHNQEGRQRSETFGFGSYGEDSRDEAGEASSDYSGAKARNQRGSTPGRTNFVQTPNRGYQTPQGTRGNRPLRGGKGRPAGGRENQQGAIPMPIMGSPFANLGMPPPSPIHSLTPGMSPIPGTSVTPVFMPPFAPTLIWPGARGVDGNMLPVPPVLSPLPPGPSGPRFPSIGTPPNPNMFFTPPGSDRGGPPNFPGSNISGQMGRGMPSDKTSGGWVPPRGGGPPGKAPSRGEQNDYSQNFVDTGMRPQNFIRELELTNVEDYPKLRELIQKKDEIVSNSASAPMYLKGDLHEVELSPELFGTKFDVILVDPPWEEYVHRAPGVSDSMEYWTFEDIINLKIEAIADTPSFLFLWVGDGVGLEQGRQCLKKWGFRRCEDICWVKTNKSNAAPTLRHDSRTVFQRSKEHCLMGIKGTVRRSTDGHIIHANIDTDVIIAEEPPYG.

The span at 1–10 (MKKKQEESSL) shows a compositional bias: basic and acidic residues. Disordered regions lie at residues 1–424 (MKKK…GAIP) and 520–569 (DRGG…EQND). Residues 40 to 49 (FESSSRSGGS) are compositionally biased toward low complexity. Composition is skewed to basic and acidic residues over residues 50–79 (KSKE…ERTH), 100–117 (DGDH…DSGG), 125–222 (EHGE…LKDN), 229–278 (SSGD…RGEA), and 333–344 (EWAHNQEGRQRS). A compositionally biased stretch (polar residues) spans 375 to 400 (QRGSTPGRTNFVQTPNRGYQTPQGTR).

It belongs to the MT-A70-like family. In terms of assembly, forms homodimers. Interacts with HAKAI, MTA and VIR. Associates with MTA, FIP37, VIR and HAKAI to form the m6A writer complex which is essential for adenosine methylation at specific mRNA sequences.

It is found in the nucleus speckle. Its subcellular location is the nucleus. The protein resides in the nucleoplasm. Functionally, probable non-catalytic subunit of the N6-methyltransferase complex, a multiprotein complex that mediates N6-methyladenosine (m6A) methylation at the 5'-[AG]GAC-3' consensus sites of some mRNAs. Associates with MTA, FIP37, VIR and HAKAI to form the m6A writer complex which is essential for adenosine methylation at specific mRNA sequences. N6-methyladenosine (m6A) plays a role in mRNA stability, processing, translation efficiency and editing. In Arabidopsis thaliana (Mouse-ear cress), this protein is N6-adenosine-methyltransferase non-catalytic subunit MTB.